Consider the following 172-residue polypeptide: RNA pyrophosphohydrolase (172 aa).

In terms of domain architecture, Nudix hydrolase spans 6-149 (GFRANVGIII…KRDVYRKVMK (144 aa)). The Nudix box motif lies at 38-59 (GGLDDGESVEEAMYRELYEEVG).

This sequence belongs to the Nudix hydrolase family. RppH subfamily. A divalent metal cation serves as cofactor.

Its function is as follows. Accelerates the degradation of transcripts by removing pyrophosphate from the 5'-end of triphosphorylated RNA, leading to a more labile monophosphorylated state that can stimulate subsequent ribonuclease cleavage. This is RNA pyrophosphohydrolase from Shewanella frigidimarina (strain NCIMB 400).